Here is a 584-residue protein sequence, read N- to C-terminus: MNNHIEALSYYLGAFVDELTRLNVCDVVISPGSRSTPIALLMEQHEGMNTYLHVDERSAGFFALGIAKAKKRPVALLCTSGTAAANYYPAVCEAFHSRVPLIVLTADRPHELRDVGAPQAMNQINLYGTFVKQFTEMALPEASEAMYHYARMTTQRMIASACLAPQGPVHLNFPVREPLIPDFSLESLWDKGRGEYTGVVQQGNAVMPSEYVDSLVGRLSHMEKGLIICGDDSHSEIATFATQLAEKTGYPILADPLSNIRSGHHDKTMVIDCYDTFLRNELLKETWKPDVLIRFGGMPVSKALTQFIKKQTKAVHIVVDESGQWRDPALVATEVVQASDIAFCSALIEKMPVMKKNDWFRMWQHINEKTKETLREMETYDTAFEGRVITDIVRVLPEGATLFASNSMPIRDTDSFFFTSDKNIQVMANRGVNGIDGIISTALGASMICDPLVLVIGDLSFYHDLNGLLAAKLHELNITIVVVNNDGGGIFSFLPQYEKKEHFESLFGTPIGLDYEHVVTMYGGSFSRVNGWEQFREEVQKGATTEGLHVVEICTNRDENLTLHRKLWAKTQDVITTSLQGESK.

It belongs to the TPP enzyme family. MenD subfamily. As to quaternary structure, homodimer. It depends on Mg(2+) as a cofactor. Requires Mn(2+) as cofactor. Thiamine diphosphate serves as cofactor.

It catalyses the reaction isochorismate + 2-oxoglutarate + H(+) = 5-enolpyruvoyl-6-hydroxy-2-succinyl-cyclohex-3-ene-1-carboxylate + CO2. It functions in the pathway quinol/quinone metabolism; 1,4-dihydroxy-2-naphthoate biosynthesis; 1,4-dihydroxy-2-naphthoate from chorismate: step 2/7. The protein operates within quinol/quinone metabolism; menaquinone biosynthesis. Its function is as follows. Catalyzes the thiamine diphosphate-dependent decarboxylation of 2-oxoglutarate and the subsequent addition of the resulting succinic semialdehyde-thiamine pyrophosphate anion to isochorismate to yield 2-succinyl-5-enolpyruvyl-6-hydroxy-3-cyclohexene-1-carboxylate (SEPHCHC). This is 2-succinyl-5-enolpyruvyl-6-hydroxy-3-cyclohexene-1-carboxylate synthase from Bacillus thuringiensis (strain Al Hakam).